We begin with the raw amino-acid sequence, 138 residues long: Putative pre-16S rRNA nuclease (138 aa).

Belongs to the YqgF nuclease family.

Its subcellular location is the cytoplasm. In terms of biological role, could be a nuclease involved in processing of the 5'-end of pre-16S rRNA. In Geobacillus kaustophilus (strain HTA426), this protein is Putative pre-16S rRNA nuclease.